Reading from the N-terminus, the 306-residue chain is Ornithine carbamoyltransferase 1, anabolic (306 aa).

Carbamoyl phosphate contacts are provided by residues 53-56 (STRT), Gln-80, Arg-104, and 131-134 (HPCQ). L-ornithine-binding positions include Asn-162, Asp-219, and 223–224 (SM). Residues 259–260 (CL) and Arg-287 contribute to the carbamoyl phosphate site.

The protein belongs to the aspartate/ornithine carbamoyltransferase superfamily. OTCase family. As to quaternary structure, homotrimer.

It localises to the cytoplasm. The catalysed reaction is carbamoyl phosphate + L-ornithine = L-citrulline + phosphate + H(+). The protein operates within amino-acid biosynthesis; L-arginine biosynthesis; L-arginine from L-ornithine and carbamoyl phosphate: step 1/3. Its activity is regulated as follows. Reversibly inhibited by inhibited by phaseolotoxin and octicidine. In terms of biological role, reversibly catalyzes the transfer of the carbamoyl group from carbamoyl phosphate (CP) to the N(epsilon) atom of ornithine (ORN) to produce L-citrulline, which is a substrate for argininosuccinate synthetase, the enzyme involved in the final step in arginine biosynthesis. The sequence is that of Ornithine carbamoyltransferase 1, anabolic from Pseudomonas savastanoi pv. phaseolicola (Pseudomonas syringae pv. phaseolicola).